We begin with the raw amino-acid sequence, 332 residues long: Ornithine carbamoyltransferase, catabolic (332 aa).

Carbamoyl phosphate contacts are provided by residues 60 to 63, glutamine 87, arginine 111, and 138 to 141; these read STRT and HPTQ. Residues asparagine 170, aspartate 230, and 234–235 contribute to the L-ornithine site; that span reads SM. Carbamoyl phosphate contacts are provided by residues 271–272 and arginine 316; that span reads CL.

The protein belongs to the aspartate/ornithine carbamoyltransferase superfamily. OTCase family.

It is found in the cytoplasm. The enzyme catalyses carbamoyl phosphate + L-ornithine = L-citrulline + phosphate + H(+). It functions in the pathway amino-acid degradation; L-arginine degradation via ADI pathway; carbamoyl phosphate from L-arginine: step 2/2. In terms of biological role, reversibly catalyzes the transfer of the carbamoyl group from carbamoyl phosphate (CP) to the N(epsilon) atom of ornithine (ORN) to produce L-citrulline. This is Ornithine carbamoyltransferase, catabolic from Bacillus cereus (strain ATCC 10987 / NRS 248).